A 288-amino-acid polypeptide reads, in one-letter code: Putative hydrolase LipZ (288 aa).

The protein belongs to the AB hydrolase superfamily.

The protein is Putative hydrolase LipZ of Mycobacterium tuberculosis (strain CDC 1551 / Oshkosh).